The following is a 457-amino-acid chain: Siroheme synthase (457 aa).

Residues 1-204 (MDHLPIFCQL…ADAKAVSEIT (204 aa)) form a precorrin-2 dehydrogenase /sirohydrochlorin ferrochelatase region. NAD(+)-binding positions include 22–23 (DV) and 43–44 (LA). A Phosphoserine modification is found at S128. Residues 216-457 (GEVVLVGAGP…RDKLNWFSNH (242 aa)) form a uroporphyrinogen-III C-methyltransferase region. P225 is an S-adenosyl-L-methionine binding site. Residue D248 is the Proton acceptor of the active site. The active-site Proton donor is the K270. Residues 301 to 303 (GGD), I306, 331 to 332 (TA), M382, and G411 contribute to the S-adenosyl-L-methionine site.

This sequence in the N-terminal section; belongs to the precorrin-2 dehydrogenase / sirohydrochlorin ferrochelatase family. The protein in the C-terminal section; belongs to the precorrin methyltransferase family.

The catalysed reaction is uroporphyrinogen III + 2 S-adenosyl-L-methionine = precorrin-2 + 2 S-adenosyl-L-homocysteine + H(+). It catalyses the reaction precorrin-2 + NAD(+) = sirohydrochlorin + NADH + 2 H(+). It carries out the reaction siroheme + 2 H(+) = sirohydrochlorin + Fe(2+). It functions in the pathway cofactor biosynthesis; adenosylcobalamin biosynthesis; precorrin-2 from uroporphyrinogen III: step 1/1. It participates in cofactor biosynthesis; adenosylcobalamin biosynthesis; sirohydrochlorin from precorrin-2: step 1/1. The protein operates within porphyrin-containing compound metabolism; siroheme biosynthesis; precorrin-2 from uroporphyrinogen III: step 1/1. Its pathway is porphyrin-containing compound metabolism; siroheme biosynthesis; siroheme from sirohydrochlorin: step 1/1. It functions in the pathway porphyrin-containing compound metabolism; siroheme biosynthesis; sirohydrochlorin from precorrin-2: step 1/1. Multifunctional enzyme that catalyzes the SAM-dependent methylations of uroporphyrinogen III at position C-2 and C-7 to form precorrin-2 via precorrin-1. Then it catalyzes the NAD-dependent ring dehydrogenation of precorrin-2 to yield sirohydrochlorin. Finally, it catalyzes the ferrochelation of sirohydrochlorin to yield siroheme. The protein is Siroheme synthase of Citrobacter koseri (strain ATCC BAA-895 / CDC 4225-83 / SGSC4696).